Reading from the N-terminus, the 188-residue chain is Ribosome-recycling factor (188 aa).

The protein belongs to the RRF family.

Its subcellular location is the cytoplasm. In terms of biological role, responsible for the release of ribosomes from messenger RNA at the termination of protein biosynthesis. May increase the efficiency of translation by recycling ribosomes from one round of translation to another. The chain is Ribosome-recycling factor from Granulibacter bethesdensis (strain ATCC BAA-1260 / CGDNIH1).